Consider the following 238-residue polypeptide: Ribonuclease 3 (238 aa).

The RNase III domain occupies 4 to 134 (PRQALLDAFG…LLGAIYLHHG (131 aa)). E44 is a binding site for Mg(2+). D48 is an active-site residue. Residues D120 and E123 each contribute to the Mg(2+) site. E123 is a catalytic residue. The DRBM domain maps to 161–229 (DWKTSLQELT…ASAAWKALDV (69 aa)).

Belongs to the ribonuclease III family. As to quaternary structure, homodimer. The cofactor is Mg(2+).

It is found in the cytoplasm. The enzyme catalyses Endonucleolytic cleavage to 5'-phosphomonoester.. Functionally, digests double-stranded RNA. Involved in the processing of primary rRNA transcript to yield the immediate precursors to the large and small rRNAs (23S and 16S). Processes some mRNAs, and tRNAs when they are encoded in the rRNA operon. Processes pre-crRNA and tracrRNA of type II CRISPR loci if present in the organism. This is Ribonuclease 3 from Mycobacterium leprae (strain TN).